The primary structure comprises 557 residues: 2-succinyl-5-enolpyruvyl-6-hydroxy-3-cyclohexene-1-carboxylate synthase (557 aa).

The protein belongs to the TPP enzyme family. MenD subfamily. As to quaternary structure, homodimer. It depends on Mg(2+) as a cofactor. Mn(2+) serves as cofactor. The cofactor is thiamine diphosphate.

The enzyme catalyses isochorismate + 2-oxoglutarate + H(+) = 5-enolpyruvoyl-6-hydroxy-2-succinyl-cyclohex-3-ene-1-carboxylate + CO2. It participates in quinol/quinone metabolism; 1,4-dihydroxy-2-naphthoate biosynthesis; 1,4-dihydroxy-2-naphthoate from chorismate: step 2/7. Its pathway is quinol/quinone metabolism; menaquinone biosynthesis. Its function is as follows. Catalyzes the thiamine diphosphate-dependent decarboxylation of 2-oxoglutarate and the subsequent addition of the resulting succinic semialdehyde-thiamine pyrophosphate anion to isochorismate to yield 2-succinyl-5-enolpyruvyl-6-hydroxy-3-cyclohexene-1-carboxylate (SEPHCHC). The protein is 2-succinyl-5-enolpyruvyl-6-hydroxy-3-cyclohexene-1-carboxylate synthase of Staphylococcus aureus (strain MSSA476).